The chain runs to 276 residues: F-actin-capping protein subunit beta (276 aa).

It belongs to the F-actin-capping protein beta subunit family. Component of the F-actin capping complex, composed of a heterodimer of an alpha and a beta subunit. Subunit of dynactin, a multiprotein complex part of a tripartite complex with dynein and a adapter, such as BICDL1, BICD2 or HOOK3.

The protein resides in the cytoplasm. The protein localises to the cytoskeleton. In terms of biological role, F-actin-capping proteins bind in a Ca(2+)-independent manner to the fast growing ends of actin filaments (barbed end) thereby blocking the exchange of subunits at these ends. Unlike other capping proteins (such as gelsolin and severin), these proteins do not sever actin filaments. Forms, with CAPZB, the barbed end of the fast growing ends of actin filaments in the dynactin complex and stabilizes dynactin structure. The dynactin multiprotein complex activates the molecular motor dynein for ultra-processive transport along microtubules. The sequence is that of F-actin-capping protein subunit beta (cpb) from Drosophila melanogaster (Fruit fly).